Here is a 120-residue protein sequence, read N- to C-terminus: Putative pterin-4-alpha-carbinolamine dehydratase (120 aa).

The protein belongs to the pterin-4-alpha-carbinolamine dehydratase family.

The enzyme catalyses (4aS,6R)-4a-hydroxy-L-erythro-5,6,7,8-tetrahydrobiopterin = (6R)-L-erythro-6,7-dihydrobiopterin + H2O. In Saccharomyces cerevisiae (strain ATCC 204508 / S288c) (Baker's yeast), this protein is Putative pterin-4-alpha-carbinolamine dehydratase.